Consider the following 436-residue polypeptide: MLDPVEASSVPVVDDSTIRSLSDFPDRNVFRREDRYPALNIPVRRTAELRKTLKHVLWRRPKTKNVYDDETDPQRRILVLANIDEDAFRDETVQRLIQHEDCRKASYTVTTAYENYTVEEILKQLLPNESEIPSAFEMVGHLAHVNLRSSQLPFKYWIGKVMLDKNQPRIRTVVNKLGTIETEYRTFGMEVIAGYQGENWSVVTVKEERCTFRLDFTKVYWNSRLAGEHRRLVQQILKESQTKPLVVADLMAGVGPFAVPLTASHGRRNQVTVYANDLNPESYKYLLQNVQSNKCTNIHCYNQCGRAMVHQLQAENIEVDHVIMNLPASAPEFLDAFRGYEGVKRPCIHVHCFAPKASEATDYQDALDRCSSALGCTLDRISNDVHVHVVRDVSPNKNMLSVSFLLPVETQSLVKMKLQPLRTETSEPGAKRIKSN.

S-adenosyl-L-methionine is bound by residues His229, 277–278 (DL), and Asn325.

Belongs to the class I-like SAM-binding methyltransferase superfamily. TRM5/TYW2 family. Monomer.

The protein localises to the mitochondrion matrix. It is found in the nucleus. The protein resides in the cytoplasm. It catalyses the reaction guanosine(37) in tRNA + S-adenosyl-L-methionine = N(1)-methylguanosine(37) in tRNA + S-adenosyl-L-homocysteine + H(+). Its function is as follows. Specifically methylates the N1 position of guanosine-37 in various cytoplasmic and mitochondrial tRNAs. Methylation is not dependent on the nature of the nucleoside 5' of the target nucleoside. This is the first step in the biosynthesis of wybutosine (yW), a modified base adjacent to the anticodon of tRNAs and required for accurate decoding. This Phaeodactylum tricornutum (strain CCAP 1055/1) protein is tRNA (guanine(37)-N(1))-methyltransferase 1.